A 615-amino-acid chain; its full sequence is DNA mismatch repair protein MutL (615 aa).

The interval 363-397 is disordered; the sequence is FAEPAAREPVAPRYTPAPASGSRPAAPWPNAQPGY. Over residues 364 to 391 the composition is skewed to low complexity; sequence AEPAAREPVAPRYTPAPASGSRPAAPWP.

It belongs to the DNA mismatch repair MutL/HexB family.

Its function is as follows. This protein is involved in the repair of mismatches in DNA. It is required for dam-dependent methyl-directed DNA mismatch repair. May act as a 'molecular matchmaker', a protein that promotes the formation of a stable complex between two or more DNA-binding proteins in an ATP-dependent manner without itself being part of a final effector complex. The polypeptide is DNA mismatch repair protein MutL (Shigella boydii serotype 4 (strain Sb227)).